We begin with the raw amino-acid sequence, 426 residues long: Serine--tRNA ligase (426 aa).

An L-serine-binding site is contributed by 235 to 237 (TAE). Position 266 to 268 (266 to 268 (RRE)) interacts with ATP. An L-serine-binding site is contributed by E289. An ATP-binding site is contributed by 353–356 (EISS). S389 serves as a coordination point for L-serine.

This sequence belongs to the class-II aminoacyl-tRNA synthetase family. Type-1 seryl-tRNA synthetase subfamily. In terms of assembly, homodimer. The tRNA molecule binds across the dimer.

It is found in the cytoplasm. The catalysed reaction is tRNA(Ser) + L-serine + ATP = L-seryl-tRNA(Ser) + AMP + diphosphate + H(+). It catalyses the reaction tRNA(Sec) + L-serine + ATP = L-seryl-tRNA(Sec) + AMP + diphosphate + H(+). Its pathway is aminoacyl-tRNA biosynthesis; selenocysteinyl-tRNA(Sec) biosynthesis; L-seryl-tRNA(Sec) from L-serine and tRNA(Sec): step 1/1. Functionally, catalyzes the attachment of serine to tRNA(Ser). Is also able to aminoacylate tRNA(Sec) with serine, to form the misacylated tRNA L-seryl-tRNA(Sec), which will be further converted into selenocysteinyl-tRNA(Sec). In Nostoc punctiforme (strain ATCC 29133 / PCC 73102), this protein is Serine--tRNA ligase.